The primary structure comprises 481 residues: MSAAEGPLVVGVDTSTQSTKALVVDVATGRVVASGQAPHTVTSGAGRESDPRQWWDALCEALRQCGEAAHEAAAVSIGGQQHGLVTLDGHGEPVRPALLWNDVRSAPQGHRLIEELGGAKFWAERTGSVPAASFTVTKWAWLAEHEPEAVRATRAVRLPHDYLTERLTGQGTTDRGDASGTGWWASGTEAYDEEILGHVGLDPALLPRVVRPGEVAGTVRDSHELPFSKGTLVACGTGDNAAAALGLGVRPGTPVMSLGTSGTVYAVTQRRPADPTGTVAGFADARGDWLPLACTLNCTLAVDRVAALLGLDREAVEPGHGVTLLPFLDGERTPNLPRSSGLLHGLRHDTTGGQLLQAAYDGAVYSLLAALDLVLDEDADPSAPLLLIGGGARGTAWQQTVRRLSGRAVQVPRAAELVALGAAAQAAGLLTGEDPAAVARRWETAAGPVLEAVERDEETLDRLAGVLSDAAPLLERGTGAG.

81-82 serves as a coordination point for substrate; that stretch reads QH. Asp239 acts as the Proton acceptor in catalysis.

Belongs to the FGGY kinase family.

The enzyme catalyses D-xylulose + ATP = D-xylulose 5-phosphate + ADP + H(+). In terms of biological role, catalyzes the phosphorylation of D-xylulose to D-xylulose 5-phosphate. The polypeptide is Xylulose kinase (Streptomyces rubiginosus).